Consider the following 157-residue polypeptide: Small ribosomal subunit protein uS7 (157 aa).

Belongs to the universal ribosomal protein uS7 family. In terms of assembly, part of the 30S ribosomal subunit. Contacts proteins S9 and S11.

Its function is as follows. One of the primary rRNA binding proteins, it binds directly to 16S rRNA where it nucleates assembly of the head domain of the 30S subunit. Is located at the subunit interface close to the decoding center, probably blocks exit of the E-site tRNA. This is Small ribosomal subunit protein uS7 from Borreliella burgdorferi (strain ATCC 35210 / DSM 4680 / CIP 102532 / B31) (Borrelia burgdorferi).